A 56-amino-acid polypeptide reads, in one-letter code: Protein YqiD (56 aa).

A helical transmembrane segment spans residues 2–22 (FIAWYWIVLIALVVVGYFLHL).

The protein resides in the cell inner membrane. This chain is Protein YqiD, found in Escherichia coli (strain K12).